The chain runs to 42 residues: Lebocin-like anionic peptide 1 (42 aa).

In terms of tissue distribution, hemolymph.

Its subcellular location is the secreted. Functionally, antimicrobial protein. Has antibacterial activity against the Gram-positive bacteria M.luteus (MIC=22.7 uM) and L.monocytogenes (MIC=90.9 uM). Lacks antibacterial activity against the Gram-positive bacteria B.circulans, S.aureus, and S.lutea, and the Gram-negative bacteria E.coli D31, E.coli ATCC 25922, and S.typhimurium. Has antifungal activity against A.niger (MIC=90.9 uM) and T.harzianum (MIC=90.9 uM), but lacks antifungal activity against S.cerevisiae, P.pastoris, Z.marxianus, C.albicans, C.fructus, and F.oxysporum. The sequence is that of Lebocin-like anionic peptide 1 from Galleria mellonella (Greater wax moth).